The sequence spans 586 residues: Penicillin-binding protein activator LpoA (586 aa).

Positions 1 to 26 are cleaved as a signal peptide; sequence MLSILMQGLRLKKCFLPILVMFFLAG. Cys-27 carries the N-palmitoyl cysteine lipid modification. Cys-27 carries the S-diacylglycerol cysteine lipid modification.

The protein belongs to the LpoA family. As to quaternary structure, interacts with PBP1a.

Its subcellular location is the cell outer membrane. In terms of biological role, regulator of peptidoglycan synthesis that is essential for the function of penicillin-binding protein 1A (PBP1a). The protein is Penicillin-binding protein activator LpoA of Histophilus somni (strain 2336) (Haemophilus somnus).